A 464-amino-acid polypeptide reads, in one-letter code: MLKIYNSLTKQKEEFKPIQPGKIGMYVCGVTIYDLCHIGHGRTFVSFDVVSRYLRYSGYDLTFVRNITDIDDKIIKRAAENGESCESLTERLIGEMHKDFDALGMKRPDIEPRATEFIAEIIILCERLIERGFAYVASNGDVMFEVSKFEEYGRLSRQDLDQLQAGARVDIDMAKRSPLDFVLWKMSKPGEPTWESPWGAGRPGWHIECSAMNSAILGDHFDIHGGGSDLQFPHHENEIAQSCCATGSQYVNTWMHSGMVMVDREKMSKSLGNFFTIRDVLAHYDAESVRYFLMSGHYRSQLNYSEDNLKQARSALERLYTSLRGLDLTAQAEGGEEFVTRFTASMNDDFNTPEAYSVLFDMAREINRLKADETIANNIVQASALGARLRELADILGLLSQDPEAFLQGGAGQDDVAEIETLVQQRLDARAAKDWAAADAARDKLLAMKIILEDGPQGTTWRRK.

Residue Cys-28 coordinates Zn(2+). The 'HIGH' region motif lies at 30-40 (VTIYDLCHIGH). Residues Cys-209, His-234, and Glu-238 each contribute to the Zn(2+) site. The short motif at 266–270 (KMSKS) is the 'KMSKS' region element. Position 269 (Lys-269) interacts with ATP.

Belongs to the class-I aminoacyl-tRNA synthetase family. Monomer. Zn(2+) is required as a cofactor.

It is found in the cytoplasm. The catalysed reaction is tRNA(Cys) + L-cysteine + ATP = L-cysteinyl-tRNA(Cys) + AMP + diphosphate. The protein is Cysteine--tRNA ligase 1 of Photobacterium profundum (strain SS9).